The primary structure comprises 352 residues: Protein pelota homolog (352 aa).

The protein belongs to the eukaryotic release factor 1 family. Pelota subfamily. In terms of assembly, monomer. It depends on a divalent metal cation as a cofactor.

The protein localises to the cytoplasm. In terms of biological role, may function in recognizing stalled ribosomes, interact with stem-loop structures in stalled mRNA molecules, and effect endonucleolytic cleavage of the mRNA. May play a role in the release non-functional ribosomes and degradation of damaged mRNAs. Has endoribonuclease activity. This chain is Protein pelota homolog, found in Thermofilum pendens (strain DSM 2475 / Hrk 5).